Here is a 758-residue protein sequence, read N- to C-terminus: 5-methyltetrahydropteroyltriglutamate--homocysteine methyltransferase (758 aa).

Residues 16 to 19 (RELK) and Lys-112 contribute to the 5-methyltetrahydropteroyltri-L-glutamate site. L-homocysteine is bound by residues 433–435 (IGS) and Glu-486. L-methionine is bound by residues 433 to 435 (IGS) and Glu-486. Residues 517 to 518 (RC) and Trp-563 contribute to the 5-methyltetrahydropteroyltri-L-glutamate site. Asp-601 lines the L-homocysteine pocket. Asp-601 contacts L-methionine. Position 607 (Glu-607) interacts with 5-methyltetrahydropteroyltri-L-glutamate. 3 residues coordinate Zn(2+): His-643, Cys-645, and Glu-667. The active-site Proton donor is His-696. Cys-728 is a binding site for Zn(2+).

Belongs to the vitamin-B12 independent methionine synthase family. Zn(2+) serves as cofactor.

The catalysed reaction is 5-methyltetrahydropteroyltri-L-glutamate + L-homocysteine = tetrahydropteroyltri-L-glutamate + L-methionine. It functions in the pathway amino-acid biosynthesis; L-methionine biosynthesis via de novo pathway; L-methionine from L-homocysteine (MetE route): step 1/1. Its function is as follows. Catalyzes the transfer of a methyl group from 5-methyltetrahydrofolate to homocysteine resulting in methionine formation. This is 5-methyltetrahydropteroyltriglutamate--homocysteine methyltransferase from Neisseria meningitidis serogroup B (strain ATCC BAA-335 / MC58).